A 167-amino-acid chain; its full sequence is MSAPILEMDIDPVWGDAIDWEDIASRAAEAAAKVAPELAHENLLVSVVLADDDEVHALNKQWRAKDKPTNVLSFPMLSREEVLHAAADEGAPGMLGDMILAHGVCTREAAEKGVSVETHATHLVVHGLLHLAGYDHELGEAEAEEMENLERKALALMGIADPYAVED.

3 residues coordinate Zn(2+): H126, H130, and H136.

Belongs to the endoribonuclease YbeY family. Zn(2+) serves as cofactor.

The protein localises to the cytoplasm. Its function is as follows. Single strand-specific metallo-endoribonuclease involved in late-stage 70S ribosome quality control and in maturation of the 3' terminus of the 16S rRNA. This chain is Endoribonuclease YbeY, found in Novosphingobium aromaticivorans (strain ATCC 700278 / DSM 12444 / CCUG 56034 / CIP 105152 / NBRC 16084 / F199).